The sequence spans 155 residues: 6,7-dimethyl-8-ribityllumazine synthase (155 aa).

Residues Phe24, 58-60, and 82-84 each bind 5-amino-6-(D-ribitylamino)uracil; these read AFE and AII. 87–88 is a (2S)-2-hydroxy-3-oxobutyl phosphate binding site; the sequence is AT. The active-site Proton donor is His90. Phe115 is a 5-amino-6-(D-ribitylamino)uracil binding site. Residue Arg129 participates in (2S)-2-hydroxy-3-oxobutyl phosphate binding.

This sequence belongs to the DMRL synthase family.

The enzyme catalyses (2S)-2-hydroxy-3-oxobutyl phosphate + 5-amino-6-(D-ribitylamino)uracil = 6,7-dimethyl-8-(1-D-ribityl)lumazine + phosphate + 2 H2O + H(+). The protein operates within cofactor biosynthesis; riboflavin biosynthesis; riboflavin from 2-hydroxy-3-oxobutyl phosphate and 5-amino-6-(D-ribitylamino)uracil: step 1/2. Catalyzes the formation of 6,7-dimethyl-8-ribityllumazine by condensation of 5-amino-6-(D-ribitylamino)uracil with 3,4-dihydroxy-2-butanone 4-phosphate. This is the penultimate step in the biosynthesis of riboflavin. The protein is 6,7-dimethyl-8-ribityllumazine synthase of Prosthecochloris aestuarii (strain DSM 271 / SK 413).